The primary structure comprises 224 residues: Pyridoxal 5'-phosphate synthase subunit SNO1 (224 aa).

67–69 (GES) serves as a coordination point for L-glutamine. Cysteine 100 serves as the catalytic Nucleophile. Residues arginine 129 and 160 to 161 (IR) contribute to the L-glutamine site. Active-site charge relay system residues include histidine 203 and glutamate 205.

It belongs to the glutaminase PdxT/SNO family.

The catalysed reaction is aldehydo-D-ribose 5-phosphate + D-glyceraldehyde 3-phosphate + L-glutamine = pyridoxal 5'-phosphate + L-glutamate + phosphate + 3 H2O + H(+). It catalyses the reaction L-glutamine + H2O = L-glutamate + NH4(+). It functions in the pathway cofactor biosynthesis; pyridoxal 5'-phosphate biosynthesis. Catalyzes the hydrolysis of glutamine to glutamate and ammonia as part of the biosynthesis of pyridoxal 5'-phosphate. The resulting ammonia molecule is channeled to the active site of a SNZ isoform. This Saccharomyces cerevisiae (strain ATCC 204508 / S288c) (Baker's yeast) protein is Pyridoxal 5'-phosphate synthase subunit SNO1 (SNO1).